Reading from the N-terminus, the 428-residue chain is Histidinol dehydrogenase (428 aa).

Substrate contacts are provided by Ser-234, Gln-256, and His-259. 2 residues coordinate Zn(2+): Gln-256 and His-259. Catalysis depends on proton acceptor residues Glu-323 and His-324. Substrate-binding residues include His-324, Asp-357, Glu-411, and His-416. A Zn(2+)-binding site is contributed by Asp-357. His-416 provides a ligand contact to Zn(2+).

It belongs to the histidinol dehydrogenase family. Requires Zn(2+) as cofactor.

It carries out the reaction L-histidinol + 2 NAD(+) + H2O = L-histidine + 2 NADH + 3 H(+). Its pathway is amino-acid biosynthesis; L-histidine biosynthesis; L-histidine from 5-phospho-alpha-D-ribose 1-diphosphate: step 9/9. In terms of biological role, catalyzes the sequential NAD-dependent oxidations of L-histidinol to L-histidinaldehyde and then to L-histidine. The chain is Histidinol dehydrogenase from Campylobacter jejuni (strain RM1221).